A 557-amino-acid chain; its full sequence is Large cysteine-rich periplasmic protein omcB (557 aa).

Residues 1–22 (MSKLIRRVVTVLALTSMASSFA) form the signal peptide. Positions 23-40 (SGKIEAAAAESLATRFIA) are excised as a propeptide.

In terms of assembly, part of a disulfide cross-linked outer membrane complex (COMC) composed of the major outer membrane porin (MOMP), the small cysteine-rich protein (omcA) and the large cysteine-rich periplasmic protein (omcB).

The protein localises to the periplasm. Functionally, in elementary bodies (EBs, the infectious stage, which is able to survive outside the host cell) provides the structural integrity of the outer envelope through disulfide cross-links with the small cysteine-rich protein and the major outer membrane porin. It has been described in publications as the Sarkosyl-insoluble COMC (Chlamydia outer membrane complex), and serves as the functional equivalent of peptidoglycan. This Chlamydophila psittaci (strain ATCC VR-125 / 6BC) (Chlamydia psittaci) protein is Large cysteine-rich periplasmic protein omcB (omcB).